The primary structure comprises 551 residues: Glucose-6-phosphate isomerase 2 (551 aa).

Glutamate 353 acts as the Proton donor in catalysis. Residues histidine 384 and lysine 512 contribute to the active site.

This sequence belongs to the GPI family.

It localises to the cytoplasm. The catalysed reaction is alpha-D-glucose 6-phosphate = beta-D-fructose 6-phosphate. Its pathway is carbohydrate biosynthesis; gluconeogenesis. It functions in the pathway carbohydrate degradation; glycolysis; D-glyceraldehyde 3-phosphate and glycerone phosphate from D-glucose: step 2/4. Its function is as follows. Catalyzes the reversible isomerization of glucose-6-phosphate to fructose-6-phosphate. The protein is Glucose-6-phosphate isomerase 2 of Colwellia psychrerythraea (strain 34H / ATCC BAA-681) (Vibrio psychroerythus).